Consider the following 212-residue polypeptide: Phosphatidylserine decarboxylase proenzyme (212 aa).

Residue Ser-182 is the Schiff-base intermediate with substrate; via pyruvic acid of the active site. Ser-182 is modified (pyruvic acid (Ser); by autocatalysis).

It belongs to the phosphatidylserine decarboxylase family. PSD-A subfamily. In terms of assembly, heterodimer of a large membrane-associated beta subunit and a small pyruvoyl-containing alpha subunit. Requires pyruvate as cofactor. Is synthesized initially as an inactive proenzyme. Formation of the active enzyme involves a self-maturation process in which the active site pyruvoyl group is generated from an internal serine residue via an autocatalytic post-translational modification. Two non-identical subunits are generated from the proenzyme in this reaction, and the pyruvate is formed at the N-terminus of the alpha chain, which is derived from the carboxyl end of the proenzyme. The post-translation cleavage follows an unusual pathway, termed non-hydrolytic serinolysis, in which the side chain hydroxyl group of the serine supplies its oxygen atom to form the C-terminus of the beta chain, while the remainder of the serine residue undergoes an oxidative deamination to produce ammonia and the pyruvoyl prosthetic group on the alpha chain.

The protein localises to the cell membrane. The catalysed reaction is a 1,2-diacyl-sn-glycero-3-phospho-L-serine + H(+) = a 1,2-diacyl-sn-glycero-3-phosphoethanolamine + CO2. The protein operates within phospholipid metabolism; phosphatidylethanolamine biosynthesis; phosphatidylethanolamine from CDP-diacylglycerol: step 2/2. Catalyzes the formation of phosphatidylethanolamine (PtdEtn) from phosphatidylserine (PtdSer). In Chlorobium chlorochromatii (strain CaD3), this protein is Phosphatidylserine decarboxylase proenzyme.